Reading from the N-terminus, the 525-residue chain is Putative EGF-like domain-containing protein R659 (525 aa).

The first 24 residues, 1–24, serve as a signal peptide directing secretion; it reads MGNKWCGIFLTILLLAQMSQTIFG. Residues N60, N77, N171, N181, N268, and N281 are each glycosylated (N-linked (GlcNAc...) asparagine; by host). Residues 317-359 form the EGF-like domain; that stretch reads LTQGCGNCDSNAECVFVSGSNSIVPKYQCKCKSGYVGNGTHCS. 3 disulfides stabilise this stretch: C321–C330, C324–C345, and C347–C358. N354 and N411 each carry an N-linked (GlcNAc...) asparagine; by host glycan.

Its subcellular location is the secreted. In Acanthamoeba polyphaga (Amoeba), this protein is Putative EGF-like domain-containing protein R659.